A 184-amino-acid polypeptide reads, in one-letter code: Protein Syd (184 aa).

Belongs to the Syd family.

The protein resides in the cell inner membrane. Interacts with the SecY protein in vivo. May bind preferentially to an uncomplexed state of SecY, thus functioning either as a chelating agent for excess SecY in the cell or as a regulatory factor that negatively controls the translocase function. The sequence is that of Protein Syd from Photobacterium profundum (strain SS9).